A 159-amino-acid polypeptide reads, in one-letter code: Phosphopantetheine adenylyltransferase (159 aa).

Thr8 contacts substrate. ATP contacts are provided by residues 8–9 and His16; that span reads TF. Residues Lys40, Thr72, and Arg86 each contribute to the substrate site. Residues 87–89, Glu97, and 122–128 contribute to the ATP site; these read GLR and YSFLSSS.

It belongs to the bacterial CoaD family. Homohexamer. Mg(2+) serves as cofactor.

The protein resides in the cytoplasm. It carries out the reaction (R)-4'-phosphopantetheine + ATP + H(+) = 3'-dephospho-CoA + diphosphate. The protein operates within cofactor biosynthesis; coenzyme A biosynthesis; CoA from (R)-pantothenate: step 4/5. Its function is as follows. Reversibly transfers an adenylyl group from ATP to 4'-phosphopantetheine, yielding dephospho-CoA (dPCoA) and pyrophosphate. The protein is Phosphopantetheine adenylyltransferase of Prochlorococcus marinus subsp. pastoris (strain CCMP1986 / NIES-2087 / MED4).